Reading from the N-terminus, the 226-residue chain is Orotidine 5'-phosphate decarboxylase (226 aa).

Residues Asp8, Lys30, 58-67 (DLKIHDIPNT), Thr117, Arg177, Gln186, Gly206, and Arg207 contribute to the substrate site. Residue Lys60 is the Proton donor of the active site.

It belongs to the OMP decarboxylase family. Type 1 subfamily. In terms of assembly, homodimer.

It catalyses the reaction orotidine 5'-phosphate + H(+) = UMP + CO2. Its pathway is pyrimidine metabolism; UMP biosynthesis via de novo pathway; UMP from orotate: step 2/2. Catalyzes the decarboxylation of orotidine 5'-monophosphate (OMP) to uridine 5'-monophosphate (UMP). This chain is Orotidine 5'-phosphate decarboxylase, found in Campylobacter jejuni subsp. jejuni serotype O:6 (strain 81116 / NCTC 11828).